We begin with the raw amino-acid sequence, 244 residues long: Orotidine 5'-phosphate decarboxylase (244 aa).

Residues aspartate 14, lysine 36, aspartate 63–threonine 72, threonine 127, arginine 188, glutamine 197, glycine 217, and arginine 218 each bind substrate. Catalysis depends on lysine 65, which acts as the Proton donor.

This sequence belongs to the OMP decarboxylase family. Type 1 subfamily. In terms of assembly, homodimer.

It catalyses the reaction orotidine 5'-phosphate + H(+) = UMP + CO2. It participates in pyrimidine metabolism; UMP biosynthesis via de novo pathway; UMP from orotate: step 2/2. Functionally, catalyzes the decarboxylation of orotidine 5'-monophosphate (OMP) to uridine 5'-monophosphate (UMP). This is Orotidine 5'-phosphate decarboxylase from Syntrophotalea carbinolica (strain DSM 2380 / NBRC 103641 / GraBd1) (Pelobacter carbinolicus).